An 80-amino-acid polypeptide reads, in one-letter code: Phosphoribosylformylglycinamidine synthase subunit PurS (80 aa).

It belongs to the PurS family. As to quaternary structure, homodimer. Part of the FGAM synthase complex composed of 1 PurL, 1 PurQ and 2 PurS subunits.

It is found in the cytoplasm. The enzyme catalyses N(2)-formyl-N(1)-(5-phospho-beta-D-ribosyl)glycinamide + L-glutamine + ATP + H2O = 2-formamido-N(1)-(5-O-phospho-beta-D-ribosyl)acetamidine + L-glutamate + ADP + phosphate + H(+). It participates in purine metabolism; IMP biosynthesis via de novo pathway; 5-amino-1-(5-phospho-D-ribosyl)imidazole from N(2)-formyl-N(1)-(5-phospho-D-ribosyl)glycinamide: step 1/2. Functionally, part of the phosphoribosylformylglycinamidine synthase complex involved in the purines biosynthetic pathway. Catalyzes the ATP-dependent conversion of formylglycinamide ribonucleotide (FGAR) and glutamine to yield formylglycinamidine ribonucleotide (FGAM) and glutamate. The FGAM synthase complex is composed of three subunits. PurQ produces an ammonia molecule by converting glutamine to glutamate. PurL transfers the ammonia molecule to FGAR to form FGAM in an ATP-dependent manner. PurS interacts with PurQ and PurL and is thought to assist in the transfer of the ammonia molecule from PurQ to PurL. This chain is Phosphoribosylformylglycinamidine synthase subunit PurS, found in Archaeoglobus fulgidus (strain ATCC 49558 / DSM 4304 / JCM 9628 / NBRC 100126 / VC-16).